The sequence spans 211 residues: NADH-quinone oxidoreductase subunit I (211 aa).

The tract at residues 21-41 (PTTEQYPEQKKETAPRFHGRH) is disordered. 4Fe-4S ferredoxin-type domains are found at residues 43-73 (LNRH…VEGA) and 89-118 (RVYQ…MSND). Cysteine 53, cysteine 56, cysteine 59, cysteine 63, cysteine 98, cysteine 101, cysteine 104, and cysteine 108 together coordinate [4Fe-4S] cluster. The segment at 141 to 211 (RAGMESPPHP…AHGAGSERPR (71 aa)) is disordered. Residues 152-166 (RLGESETDYYTRDPD) are compositionally biased toward basic and acidic residues. A compositionally biased stretch (acidic residues) spans 179 to 191 (DEADEAGEAGEAG). Positions 192–211 (EAERAADKVPAHGAGSERPR) are enriched in basic and acidic residues.

It belongs to the complex I 23 kDa subunit family. In terms of assembly, NDH-1 is composed of 14 different subunits. Subunits NuoA, H, J, K, L, M, N constitute the membrane sector of the complex. Requires [4Fe-4S] cluster as cofactor.

The protein resides in the cell membrane. It catalyses the reaction a quinone + NADH + 5 H(+)(in) = a quinol + NAD(+) + 4 H(+)(out). In terms of biological role, NDH-1 shuttles electrons from NADH, via FMN and iron-sulfur (Fe-S) centers, to quinones in the respiratory chain. The immediate electron acceptor for the enzyme in this species is believed to be ubiquinone. Couples the redox reaction to proton translocation (for every two electrons transferred, four hydrogen ions are translocated across the cytoplasmic membrane), and thus conserves the redox energy in a proton gradient. The sequence is that of NADH-quinone oxidoreductase subunit I from Parafrankia sp. (strain EAN1pec).